Reading from the N-terminus, the 78-residue chain is Acyl carrier protein (78 aa).

The Carrier domain maps to 2–77; it reads STIEERVKKI…AAIDFINANQ (76 aa). An O-(pantetheine 4'-phosphoryl)serine modification is found at Ser37.

The protein belongs to the acyl carrier protein (ACP) family. Post-translationally, 4'-phosphopantetheine is transferred from CoA to a specific serine of apo-ACP by AcpS. This modification is essential for activity because fatty acids are bound in thioester linkage to the sulfhydryl of the prosthetic group.

The protein resides in the cytoplasm. It participates in lipid metabolism; fatty acid biosynthesis. Its function is as follows. Carrier of the growing fatty acid chain in fatty acid biosynthesis. The sequence is that of Acyl carrier protein from Yersinia pseudotuberculosis serotype O:1b (strain IP 31758).